The chain runs to 87 residues: HssA/B-like protein 8 (87 aa).

Residues 1 to 22 (MSILSALTSISNPMKSTKSSVA) show a composition bias toward polar residues. A disordered region spans residues 1 to 24 (MSILSALTSISNPMKSTKSSVANG).

The protein belongs to the hssA/B family.

The protein is HssA/B-like protein 8 (hssl8) of Dictyostelium discoideum (Social amoeba).